The chain runs to 945 residues: Xylanolytic transcriptional activator xlnR (945 aa).

2 disordered regions span residues 1 to 33 (MSTPSIPQFPSPFSPFSSGSQSTGMAPSQTVGL) and 53 to 74 (AAGTGAGDGATSTSLRNSMSHA). Positions 14–24 (SPFSSGSQSTG) are enriched in low complexity. A DNA-binding region (zn(2)-C6 fungal-type) is located at residues 125–151 (CDQCNQLRTKCDGQHPCAHCIEFGLTC). Disordered regions lie at residues 172 to 251 (AAAA…PSLG) and 559 to 601 (PPNV…INVT). 2 stretches are compositionally biased toward polar residues: residues 177-188 (HGSNGHSGQANA) and 218-251 (ISSQPSHMQHANNAGISGLHDSQTAPSHSQPSLG). Over residues 565-581 (ARQDGERDGDGEADRRH) the composition is skewed to basic and acidic residues.

This sequence belongs to the xlnR/xlr1 family.

The protein resides in the nucleus. Functionally, transcriptional activator of the xylanolytic system. Involved in the regulation of extracellular cellulolytic and xylanolytic genes and in the regulation of the intracellular activities of D-xylose catabolic genes in the pentose catabolic pathway (PCP) in response to the presence of D-xylose. In Aspergillus kawachii (White koji mold), this protein is Xylanolytic transcriptional activator xlnR (xlnR).